Here is a 678-residue protein sequence, read N- to C-terminus: Translation factor GUF1 homolog, chloroplastic (678 aa).

The N-terminal 43 residues, 1–43 (MASILLSLNTHTLLPLHTRTRTTKTTLKILRFSHKLPPSSPFY), are a transit peptide targeting the chloroplast. The region spanning 81–262 (KNIRNFCIIA…AIVERVPPPR (182 aa)) is the tr-type G domain. Residues 90–97 (AHIDHGKS), 155–159 (DTPGH), and 209–212 (NKID) each bind GTP.

It belongs to the TRAFAC class translation factor GTPase superfamily. Classic translation factor GTPase family. LepA subfamily.

The protein resides in the plastid. It is found in the chloroplast. The catalysed reaction is GTP + H2O = GDP + phosphate + H(+). Its function is as follows. Promotes chloroplast protein synthesis. May act as a fidelity factor of the translation reaction, by catalyzing a one-codon backward translocation of tRNAs on improperly translocated ribosomes. In Populus trichocarpa (Western balsam poplar), this protein is Translation factor GUF1 homolog, chloroplastic.